The primary structure comprises 156 residues: ATP synthase subunit b (156 aa).

The chain crosses the membrane as a helical span at residues 7–27; that stretch reads LFAQMIVFFVLWWVVARFVWP.

It belongs to the ATPase B chain family. As to quaternary structure, F-type ATPases have 2 components, F(1) - the catalytic core - and F(0) - the membrane proton channel. F(1) has five subunits: alpha(3), beta(3), gamma(1), delta(1), epsilon(1). F(0) has three main subunits: a(1), b(2) and c(10-14). The alpha and beta chains form an alternating ring which encloses part of the gamma chain. F(1) is attached to F(0) by a central stalk formed by the gamma and epsilon chains, while a peripheral stalk is formed by the delta and b chains.

It is found in the cell inner membrane. F(1)F(0) ATP synthase produces ATP from ADP in the presence of a proton or sodium gradient. F-type ATPases consist of two structural domains, F(1) containing the extramembraneous catalytic core and F(0) containing the membrane proton channel, linked together by a central stalk and a peripheral stalk. During catalysis, ATP synthesis in the catalytic domain of F(1) is coupled via a rotary mechanism of the central stalk subunits to proton translocation. Functionally, component of the F(0) channel, it forms part of the peripheral stalk, linking F(1) to F(0). The chain is ATP synthase subunit b from Polynucleobacter necessarius subsp. necessarius (strain STIR1).